The primary structure comprises 117 residues: Large ribosomal subunit protein uL18 (117 aa).

This sequence belongs to the universal ribosomal protein uL18 family. In terms of assembly, part of the 50S ribosomal subunit; part of the 5S rRNA/L5/L18/L25 subcomplex. Contacts the 5S and 23S rRNAs.

Functionally, this is one of the proteins that bind and probably mediate the attachment of the 5S RNA into the large ribosomal subunit, where it forms part of the central protuberance. This chain is Large ribosomal subunit protein uL18, found in Aster yellows witches'-broom phytoplasma (strain AYWB).